Consider the following 732-residue polypeptide: uncharacterized protein (732 aa).

Positions 163–390 (YYTINELNYL…FGIVAKKKYE (228 aa)) constitute a TR mART core domain. Catalysis depends on residues Arg285, Ser309, and Glu354.

This is an uncharacterized protein from Acanthamoeba polyphaga mimivirus (APMV).